Here is a 259-residue protein sequence, read N- to C-terminus: Gem-associated protein 2 (259 aa).

This sequence belongs to the gemin-2 family. In terms of assembly, forms a stable heteromeric complex with survival of motor neuron protein (SMN), GEMIN3 and GEMIN4. The SMN complex is associated with the spliceosomal snRNAs U1 and U5 in the cytoplasm of oocytes.

The protein resides in the nucleus. The protein localises to the gem. It localises to the cytoplasm. Functionally, the SMN complex catalyzes the assembly of small nuclear ribonucleoproteins (snRNPs), the building blocks of the spliceosome, and thereby plays an important role in the splicing of cellular pre-mRNAs. Most spliceosomal snRNPs contain a common set of Sm proteins SNRPB, SNRPD1, SNRPD2, SNRPD3, SNRPE, SNRPF and SNRPG that assemble in a heptameric protein ring on the Sm site of the small nuclear RNA to form the core snRNP (Sm core). In the cytosol, the Sm proteins SNRPD1, SNRPD2, SNRPE, SNRPF and SNRPG (5Sm) are trapped in an inactive 6S pICln-Sm complex by the chaperone CLNS1A that controls the assembly of the core snRNP. To assemble core snRNPs, the SMN complex accepts the trapped 5Sm proteins from CLNS1A. Binding of snRNA inside 5Sm ultimately triggers eviction of the SMN complex, thereby allowing binding of SNRPD3 and SNRPB to complete assembly of the core snRNP. Within the SMN complex, GEMIN2 constrains the conformation of 5Sm, thereby promoting 5Sm binding to snRNA containing the snRNP code (a nonameric Sm site and a 3'-adjacent stem-loop), thus preventing progression of assembly until a cognate substrate is bound. The chain is Gem-associated protein 2 (gemin2) from Xenopus laevis (African clawed frog).